Reading from the N-terminus, the 410-residue chain is Arginine deiminase (410 aa).

Cys400 functions as the Amidino-cysteine intermediate in the catalytic mechanism.

This sequence belongs to the arginine deiminase family.

It localises to the cytoplasm. The catalysed reaction is L-arginine + H2O = L-citrulline + NH4(+). It participates in amino-acid degradation; L-arginine degradation via ADI pathway; carbamoyl phosphate from L-arginine: step 1/2. The sequence is that of Arginine deiminase from Bacillus cytotoxicus (strain DSM 22905 / CIP 110041 / 391-98 / NVH 391-98).